A 37-amino-acid chain; its full sequence is Bacteriocin lactococcin MMFII (37 aa).

Cysteine 9 and cysteine 14 are joined by a disulfide.

The protein resides in the secreted. Functionally, bacteriocin active against Listeria monocytogenes and Lactococcus cremoris. The sequence is that of Bacteriocin lactococcin MMFII from Lactococcus lactis subsp. lactis (Streptococcus lactis).